We begin with the raw amino-acid sequence, 421 residues long: Serine--tRNA ligase (421 aa).

Position 227-229 (227-229 (TSE)) interacts with L-serine. ATP is bound by residues 257-259 (RRE) and valine 273. Residue glutamate 280 participates in L-serine binding. 344-347 (ELTS) provides a ligand contact to ATP. Threonine 379 contacts L-serine.

Belongs to the class-II aminoacyl-tRNA synthetase family. Type-1 seryl-tRNA synthetase subfamily. In terms of assembly, homodimer. The tRNA molecule binds across the dimer.

The protein resides in the cytoplasm. It catalyses the reaction tRNA(Ser) + L-serine + ATP = L-seryl-tRNA(Ser) + AMP + diphosphate + H(+). The catalysed reaction is tRNA(Sec) + L-serine + ATP = L-seryl-tRNA(Sec) + AMP + diphosphate + H(+). The protein operates within aminoacyl-tRNA biosynthesis; selenocysteinyl-tRNA(Sec) biosynthesis; L-seryl-tRNA(Sec) from L-serine and tRNA(Sec): step 1/1. Catalyzes the attachment of serine to tRNA(Ser). Is also able to aminoacylate tRNA(Sec) with serine, to form the misacylated tRNA L-seryl-tRNA(Sec), which will be further converted into selenocysteinyl-tRNA(Sec). In Leifsonia xyli subsp. xyli (strain CTCB07), this protein is Serine--tRNA ligase.